A 429-amino-acid polypeptide reads, in one-letter code: Glucose-6-phosphate isomerase (429 aa).

Glu-282 functions as the Proton donor in the catalytic mechanism. Residues His-303 and Lys-418 contribute to the active site.

Belongs to the GPI family.

It localises to the cytoplasm. It carries out the reaction alpha-D-glucose 6-phosphate = beta-D-fructose 6-phosphate. The protein operates within carbohydrate biosynthesis; gluconeogenesis. Its pathway is carbohydrate degradation; glycolysis; D-glyceraldehyde 3-phosphate and glycerone phosphate from D-glucose: step 2/4. In terms of biological role, catalyzes the reversible isomerization of glucose-6-phosphate to fructose-6-phosphate. In Mesomycoplasma hyopneumoniae (strain 232) (Mycoplasma hyopneumoniae), this protein is Glucose-6-phosphate isomerase.